A 130-amino-acid chain; its full sequence is MRHYEIVFMVHPDQSEQVPGMIERYSGVITAANGTIHRLEDWGRRQLAYPIQDLHKAHYVLMNVEATAESIEELETAFRFNDAVLRNMVMRTKVAVTEASPMAKARDERDSRRSPSDDRIEEESAEENAE.

The interval 96-130 is disordered; that stretch reads VTEASPMAKARDERDSRRSPSDDRIEEESAEENAE. Residues 104–118 show a composition bias toward basic and acidic residues; that stretch reads KARDERDSRRSPSDD. Over residues 119–130 the composition is skewed to acidic residues; that stretch reads RIEEESAEENAE.

It belongs to the bacterial ribosomal protein bS6 family.

Binds together with bS18 to 16S ribosomal RNA. The polypeptide is Small ribosomal subunit protein bS6 (Shewanella denitrificans (strain OS217 / ATCC BAA-1090 / DSM 15013)).